We begin with the raw amino-acid sequence, 970 residues long: uncharacterized protein (970 aa).

A helical membrane pass occupies residues Val12–Phe32.

This sequence to E.coli YtfN.

The protein localises to the membrane. This is an uncharacterized protein from Buchnera aphidicola subsp. Acyrthosiphon pisum (strain APS) (Acyrthosiphon pisum symbiotic bacterium).